The chain runs to 343 residues: 4-hydroxythreonine-4-phosphate dehydrogenase (343 aa).

2 residues coordinate substrate: histidine 141 and threonine 142. Residues histidine 175, histidine 220, and histidine 275 each contribute to the a divalent metal cation site. Substrate-binding residues include lysine 283, asparagine 292, and arginine 301.

This sequence belongs to the PdxA family. In terms of assembly, homodimer. Zn(2+) is required as a cofactor. Mg(2+) serves as cofactor. It depends on Co(2+) as a cofactor.

It localises to the cytoplasm. It carries out the reaction 4-(phosphooxy)-L-threonine + NAD(+) = 3-amino-2-oxopropyl phosphate + CO2 + NADH. It functions in the pathway cofactor biosynthesis; pyridoxine 5'-phosphate biosynthesis; pyridoxine 5'-phosphate from D-erythrose 4-phosphate: step 4/5. Catalyzes the NAD(P)-dependent oxidation of 4-(phosphooxy)-L-threonine (HTP) into 2-amino-3-oxo-4-(phosphooxy)butyric acid which spontaneously decarboxylates to form 3-amino-2-oxopropyl phosphate (AHAP). In Janthinobacterium sp. (strain Marseille) (Minibacterium massiliensis), this protein is 4-hydroxythreonine-4-phosphate dehydrogenase.